Consider the following 47-residue polypeptide: Defensin-like protein 1 (47 aa).

4 disulfide bridges follow: cysteine 5-cysteine 47, cysteine 16-cysteine 36, cysteine 22-cysteine 43, and cysteine 26-cysteine 45.

This sequence belongs to the DEFL family.

In terms of biological role, fabatins have antibacterial activity against Gram-positive and Gram-negative bacteria. High activity against P.aeruginosa. No activity against S.cerevisiae and C.albicans. The sequence is that of Defensin-like protein 1 from Vicia faba (Broad bean).